The following is a 336-amino-acid chain: Formimidoylglutamase (336 aa).

Residues H129, D160, H162, D164, D257, and D259 each coordinate Mn(2+).

It belongs to the arginase family. It depends on Mn(2+) as a cofactor.

The enzyme catalyses N-formimidoyl-L-glutamate + H2O = formamide + L-glutamate. It functions in the pathway amino-acid degradation; L-histidine degradation into L-glutamate; L-glutamate from N-formimidoyl-L-glutamate (hydrolase route): step 1/1. Functionally, catalyzes the conversion of N-formimidoyl-L-glutamate to L-glutamate and formamide. This is Formimidoylglutamase from Vibrio vulnificus (strain YJ016).